A 348-amino-acid chain; its full sequence is MKIIQEIPEKNIIKLIPENLDDLWHLSNIIQPYNAIYAVTERRTEDKGDKLRADRGTKRKVFLGIKAEKINFHEDFNRLRVSGKIIHAPEDIPIGSYHTIDIEPLLQVSVQKNWKKWDLARLKDAEDSSKKPKVVVVIMDDSEADIFLVREFGIKELASIKSGVSKKLDYKQNEQAKFSYYSDIINSISEFEGKILFAGPGFGKNNIQNYISEKHKDLAPNVVVESANHTGKSGLSEILKSGIIDKIYGEARISKETQIIEKLLEEISKKGLAAYGIESVNNAMNYSAIDTLLLTDEYLRRNRRTIEELMNSVENINGSILIISTEHDAGKQLKALGGISALLRFPIE.

It belongs to the eukaryotic release factor 1 family. Pelota subfamily. As to quaternary structure, monomer. It depends on a divalent metal cation as a cofactor.

The protein localises to the cytoplasm. May function in recognizing stalled ribosomes, interact with stem-loop structures in stalled mRNA molecules, and effect endonucleolytic cleavage of the mRNA. May play a role in the release non-functional ribosomes and degradation of damaged mRNAs. Has endoribonuclease activity. This is Protein pelota homolog from Methanococcus maripaludis (strain C7 / ATCC BAA-1331).